The chain runs to 366 residues: NADH-quinone oxidoreductase subunit D (366 aa).

The protein belongs to the complex I 49 kDa subunit family. As to quaternary structure, NDH-1 is composed of 14 different subunits. Subunits NuoB, C, D, E, F, and G constitute the peripheral sector of the complex.

It is found in the cell membrane. It carries out the reaction a quinone + NADH + 5 H(+)(in) = a quinol + NAD(+) + 4 H(+)(out). Functionally, NDH-1 shuttles electrons from NADH, via FMN and iron-sulfur (Fe-S) centers, to quinones in the respiratory chain. The immediate electron acceptor for the enzyme in this species is believed to be a menaquinone. Couples the redox reaction to proton translocation (for every two electrons transferred, four hydrogen ions are translocated across the cytoplasmic membrane), and thus conserves the redox energy in a proton gradient. This chain is NADH-quinone oxidoreductase subunit D, found in Bacillus cereus (strain ZK / E33L).